A 945-amino-acid chain; its full sequence is Netrin receptor UNC5B (945 aa).

A signal peptide spans 1-26; that stretch reads MRARSGVRSALLLALLLCWDPTPSLA. Topologically, residues 27-377 are extracellular; sequence GVDSAGQVLP…LETSGDVALY (351 aa). Positions 48 to 145 constitute an Ig-like domain; the sequence is PYFLLEPQDA…SGTTKSRRAY (98 aa). 9 cysteine pairs are disulfide-bonded: C69–C130, C81–C128, C174–C225, C258–C295, C262–C299, C273–C285, C314–C348, C318–C353, and C326–C338. Residues 153 to 242 enclose the Ig-like C2-type domain; it reads KNFDQEPLAK…KRRSTTATVI (90 aa). A glycan (N-linked (GlcNAc...) asparagine) is linked at N222. 2 consecutive TSP type-1 domains span residues 246 to 300 and 302 to 354; these read NGGW…TVCP and DGAW…GLCV. N-linked (GlcNAc...) asparagine glycosylation occurs at N347. A helical membrane pass occupies residues 378–398; the sequence is AGLVVAVFVVVAVLMAVGVIV. At 399-945 the chain is on the cytoplasmic side; that stretch reads YRRNCRDFDT…LVAMATDGDC (547 aa). The S-palmitoyl cysteine moiety is linked to residue C403. Residues 543–686 form the ZU5 domain; sequence SSVSGTFGCL…LGTYVFMGES (144 aa). Y581 is modified (phosphotyrosine). Residues 689-838 form a UPA domain region; sequence RSAVKRLQLA…AETPAGSLDA (150 aa). Residues 707-725 form an interaction with DCC region; that stretch reads SLEYSLRVYCLEDTPVALK. The Death domain occupies 865–943; the sequence is KICSSLDAPN…EMLVAMATDG (79 aa).

This sequence belongs to the unc-5 family. As to quaternary structure, interacts with the cytoplasmic part of DCC. Interacts with GNAI2 via its cytoplasmic part. Interacts (via death domain) with DAPK1 (via death domain). Interacts (via extracellular domain) with FLRT2 and FLRT3 (via extracellular domain), but has higher affinity for FLRT3. Identified in a complex with FLRT3 and ADGRL3; does not interact with ADGRL3 by itself. Post-translationally, phosphorylated on cytoplasmic tyrosine residues. In terms of processing, palmitoylation is required for pro-apoptotic activity, but not for location at lipid rafts. Proteolytically cleaved by caspases during apoptosis. The cleavage does not take place when the receptor is associated with netrin ligand. Its cleavage by caspases is required to induce apoptosis. As to expression, highly expressed in brain. Expressed in lung during late development. Expressed during early blood vessel formation, in the semicircular canal and in a dorsal to ventral gradient in the retina.

The protein localises to the cell membrane. It localises to the membrane raft. Receptor for netrin required for axon guidance. Mediates axon repulsion of neuronal growth cones in the developing nervous system upon ligand binding. Axon repulsion in growth cones may be caused by its association with DCC that may trigger signaling for repulsion. Functions as a netrin receptor that negatively regulates vascular branching during angiogenesis. Mediates retraction of tip cell filopodia on endothelial growth cones in response to netrin. It also acts as a dependence receptor required for apoptosis induction when not associated with netrin ligand. Mediates apoptosis by activating DAPK1. In the absence of NTN1, activates DAPK1 by reducing its autoinhibitory phosphorylation at Ser-308 thereby increasing its catalytic activity. The protein is Netrin receptor UNC5B (Unc5b) of Mus musculus (Mouse).